A 79-amino-acid chain; its full sequence is ATP synthase subunit c (79 aa).

2 helical membrane passes run 11–31 and 59–79; these read IAVA…IGIL and LVDA…FAVI.

The protein belongs to the ATPase C chain family. As to quaternary structure, F-type ATPases have 2 components, F(1) - the catalytic core - and F(0) - the membrane proton channel. F(1) has five subunits: alpha(3), beta(3), gamma(1), delta(1), epsilon(1). F(0) has three main subunits: a(1), b(2) and c(10-14). The alpha and beta chains form an alternating ring which encloses part of the gamma chain. F(1) is attached to F(0) by a central stalk formed by the gamma and epsilon chains, while a peripheral stalk is formed by the delta and b chains.

The protein localises to the cell membrane. In terms of biological role, f(1)F(0) ATP synthase produces ATP from ADP in the presence of a proton or sodium gradient. F-type ATPases consist of two structural domains, F(1) containing the extramembraneous catalytic core and F(0) containing the membrane proton channel, linked together by a central stalk and a peripheral stalk. During catalysis, ATP synthesis in the catalytic domain of F(1) is coupled via a rotary mechanism of the central stalk subunits to proton translocation. Key component of the F(0) channel; it plays a direct role in translocation across the membrane. A homomeric c-ring of between 10-14 subunits forms the central stalk rotor element with the F(1) delta and epsilon subunits. The protein is ATP synthase subunit c of Buchnera aphidicola subsp. Baizongia pistaciae (strain Bp).